Consider the following 485-residue polypeptide: Protein DETOXIFICATION 14 (485 aa).

A run of 12 helical transmembrane segments spans residues 30–50 (LSYI…LQVI), 68–88 (IAVS…ASAL), 112–132 (IVSL…IGDI), 147–167 (GKFA…QPLV), 175–195 (LILP…VLCW), 207–227 (GAAI…GLYM), 259–279 (ASMI…SGIL), 288–308 (VLSV…SLGA), 329–349 (AVYT…AIVF), 372–392 (MAPL…LSGV), 405–425 (VNLA…AFGF), and 432–452 (LWIG…LIVI).

This sequence belongs to the multi antimicrobial extrusion (MATE) (TC 2.A.66.1) family.

The protein localises to the membrane. The polypeptide is Protein DETOXIFICATION 14 (Arabidopsis thaliana (Mouse-ear cress)).